Here is a 456-residue protein sequence, read N- to C-terminus: B-cell linker protein (456 aa).

Residues isoleucine 36–lysine 301 are disordered. Positions proline 57–asparagine 74 are enriched in acidic residues. Tyrosine 72, tyrosine 84, tyrosine 96, tyrosine 178, and tyrosine 189 each carry phosphotyrosine; by SYK. Over residues glutamate 173 to glutamate 187 the composition is skewed to acidic residues. The segment covering proline 212–glycine 226 has biased composition (low complexity). The segment covering serine 236–leucine 245 has biased composition (pro residues). The span at lysine 251–proline 260 shows a compositional bias: low complexity. The segment covering cysteine 271–glutamate 289 has biased composition (basic and acidic residues). The SH2 domain occupies tryptophan 346–valine 453.

In terms of assembly, associates with PLCG1, VAV1 and NCK1 in a B-cell antigen receptor-dependent fashion. Interacts with VAV3, PLCG2 and GRB2. Interacts through its SH2 domain with CD79A. Interacts (via SH2 domain) with SYK; phosphorylated and activated by SYK. Interacts (via SH2 domain) with SCIMP; this interaction is dependent on phosphorylation of SCIMP 'Tyr-131'. In terms of processing, following BCR activation, phosphorylated on tyrosine residues by SYK and LYN. When phosphorylated, serves as a scaffold to assemble downstream targets of antigen activation, including PLCG1, VAV1, GRB2 and NCK1. Phosphorylation of Tyr-84, Tyr-178 and Tyr-189 facilitates PLCG1 binding. Phosphorylation of Tyr-96 facilitates BTK binding. Phosphorylation of Tyr-72 facilitates VAV1 and NCK1 binding. Phosphorylation is required for both Ca(2+) and MAPK signaling pathways. Expressed in B-cell lineage and fibroblast cell lines (at protein level). Highest levels of expression in the spleen, with lower levels in the liver, kidney, pancreas, small intestines and colon.

The protein resides in the cytoplasm. The protein localises to the cell membrane. Its function is as follows. Functions as a central linker protein, downstream of the B-cell receptor (BCR), bridging the SYK kinase to a multitude of signaling pathways and regulating biological outcomes of B-cell function and development. Plays a role in the activation of ERK/EPHB2, MAP kinase p38 and JNK. Modulates AP1 activation. Important for the activation of NF-kappa-B and NFAT. Plays an important role in BCR-mediated PLCG1 and PLCG2 activation and Ca(2+) mobilization and is required for trafficking of the BCR to late endosomes. However, does not seem to be required for pre-BCR-mediated activation of MAP kinase and phosphatidyl-inositol 3 (PI3) kinase signaling. May be required for the RAC1-JNK pathway. Plays a critical role in orchestrating the pro-B cell to pre-B cell transition. May play an important role in BCR-induced B-cell apoptosis. The protein is B-cell linker protein (BLNK) of Homo sapiens (Human).